The following is a 221-amino-acid chain: N-acetyltransferase 8F1 (221 aa).

A helical membrane pass occupies residues 53–73 (LVLVSGSWLLAVVCIFFLLLL). The 151-residue stretch at 69 to 219 (FLLLLLRFLA…RTIQLKYPFP (151 aa)) folds into the N-acetyltransferase domain.

It belongs to the camello family.

It is found in the membrane. May play a role in regulation of gastrulation. The sequence is that of N-acetyltransferase 8F1 from Rattus norvegicus (Rat).